Here is a 133-residue protein sequence, read N- to C-terminus: MALKIRLARAGSKKRPYYHVVVADARSPRDGRFIESLGSWNPLLPKDGERVKVDADRVKHWLSHGAQPTDRVLRFLDEAGLAKRDARSNPKKAEPGKKAQERAALLKKAQEDAAAAVAAAAAAPAEAEAATAE.

Residues 83–101 show a composition bias toward basic and acidic residues; the sequence is KRDARSNPKKAEPGKKAQE. The tract at residues 83–102 is disordered; the sequence is KRDARSNPKKAEPGKKAQER.

Belongs to the bacterial ribosomal protein bS16 family.

The protein is Small ribosomal subunit protein bS16 of Mesorhizobium japonicum (strain LMG 29417 / CECT 9101 / MAFF 303099) (Mesorhizobium loti (strain MAFF 303099)).